Consider the following 1008-residue polypeptide: Envelopment polyprotein (1008 aa).

An N-terminal signal peptide occupies residues 1-17; sequence MVRTYLLLLLLCGPATP. Residues 18-394 lie on the Lumenal side of the membrane; it reads FFNHLMDVTR…NWANIHCFSK (377 aa). N-linked (GlcNAc...) asparagine; by host glycosylation is found at N34, N70, and N108. Disulfide bonds link C138–C269, C156–C166, C206–C247, C216–C226, C233–C238, C292–C295, C299–C368, and C319–C324. N208 carries N-linked (GlcNAc...) asparagine; by host glycosylation. A helical transmembrane segment spans residues 395 to 415; that stretch reads EQVLILVAVSSLCILLLASVL. The Cytoplasmic portion of the chain corresponds to 416 to 496; that stretch reads RALKVIATFT…VRQKMFNLTR (81 aa). The interval 419-465 is golgi retention signal; it reads KVIATFTWKIIKPFWWILSLLCRTCSKRLNKRAERLKESIHSLEEGL. The important for correct targeting of the glycoproteins to the Golgi complex but not for heterodimerization stretch occupies residues 461–465; that stretch reads LEEGL. The tract at residues 497-513 is internal signal sequence for glycoprotein C; that stretch reads LSPVVVGMLCLACPVES. 12 cysteine pairs are disulfide-bonded: C514-C555, C527-C537, C580-C677, C595-C789, C601-C650, C607-C657, C612-C639, C643-C648, C728-C742, C758-C771, C851-C924, and C861-C864. The Lumenal segment spans residues 514–977; the sequence is CSDSISVTAS…GWFKASWLRA (464 aa). The interval 601–607 is fusion loop; the sequence is CHLMGAC. The segment at 644–655 is fusion loop; that stretch reads GGALCQCFNMRP. N-linked (GlcNAc...) asparagine; by host glycosylation is found at N691 and N696. N-linked (GlcNAc...) asparagine; by host glycans are attached at residues N912 and N949. Residues 978-998 form a helical membrane-spanning segment; sequence IWAILGGTVSLIIGVVIIYMV. The Cytoplasmic segment spans residues 999–1008; sequence FTLCLKVKKS.

It belongs to the phlebovirus envelope glycoprotein family. In terms of assembly, homodimer. Heterodimer with glycoprotein C. Homotrimer (postfusion). Heterodimer with glycoprotein N. Homotrimer (postfusion). In terms of processing, specific enzymatic cleavages in vivo yield mature proteins including glycoprotein C and glycoprotein N. Post-translationally, the cytoplasmic tail is Palmitoylated. Glycosylated. Contains principally poly-N-acetyllactosamine glycans. In terms of processing, glycosylated. Contains principally oligomannose-type glycans that can attach to host CD209/DC-SIGN. Post-translationally, palmitoylated.

The protein resides in the virion membrane. Its subcellular location is the host Golgi apparatus membrane. It localises to the host endoplasmic reticulum membrane. In terms of biological role, structural component of the virion that interacts with glycoprotein C. It shields the hydrophobic fusion loops of the glycoprotein C, preventing premature fusion. The glycoprotein protrusions are arranged on an icosahedral lattice, with T=12 triangulation. They are able to attach the virion to the host cell receptor CD209/DC-SIGN and to promote fusion of membranes with the late endosome after endocytosis of the virion. Plays a role in the packaging of ribonucleoproteins during virus assembly. Functionally, structural component of the virion that interacts with glycoprotein N. Acts as a class II fusion protein that is activated upon acidification and subsequent repositioning of the glycoprotein N. The glycoprotein protrusions are arranged on an icosahedral lattice, with T=12 triangulation. They are able to attach the virion to the host cell receptor CD209/DC-SIGN and to promote fusion of membranes with the late endosome after endocytosis of the virion. The protein is Envelopment polyprotein (GP) of Homo sapiens (Human).